A 386-amino-acid chain; its full sequence is Protein lin-8 (386 aa).

The segment at 175 to 285 (LGLEARRASK…FSQQYGGGGS (111 aa)) is sufficient for interaction with lin-35. The disordered stretch occupies residues 212 to 240 (EEPYEETGSNWSDPAPEPSQSKSQSPEAK). Over residues 229-240 (PSQSKSQSPEAK) the composition is skewed to low complexity.

Belongs to the lin-8 family. Interacts with lin-35 (via C-terminus). In terms of tissue distribution, widely expressed throughout development, with particularly prominent expression in the germline and in neuronal nuclei of the head (at protein level).

Its subcellular location is the nucleus. Acts as a synthetic multivulva class A (synMuvA) protein and redundantly inhibits lin-3/EGF expression to prevent inappropriate vulva induction. In Caenorhabditis elegans, this protein is Protein lin-8.